Here is a 503-residue protein sequence, read N- to C-terminus: Glutamate--tRNA ligase (503 aa).

Residues 15-25 (PSPTGYLHVGG) carry the 'HIGH' region motif. The 'KMSKS' region motif lies at 262-266 (KLSKR). An ATP-binding site is contributed by Lys-265.

This sequence belongs to the class-I aminoacyl-tRNA synthetase family. Glutamate--tRNA ligase type 1 subfamily. Monomer.

It localises to the cytoplasm. It catalyses the reaction tRNA(Glu) + L-glutamate + ATP = L-glutamyl-tRNA(Glu) + AMP + diphosphate. Catalyzes the attachment of glutamate to tRNA(Glu) in a two-step reaction: glutamate is first activated by ATP to form Glu-AMP and then transferred to the acceptor end of tRNA(Glu). The chain is Glutamate--tRNA ligase from Prosthecochloris aestuarii (strain DSM 271 / SK 413).